We begin with the raw amino-acid sequence, 1020 residues long: FERM domain-containing protein 4A (1020 aa).

The region spanning 5 to 307 (RRCQVHLLDD…SQHQFYLDRK (303 aa)) is the FERM domain. The necessary for interaction with CYTH1 stretch occupies residues 343 to 405 (KGKIISGSSG…RLCLREAELT (63 aa)). Residues 351–367 (SGSLLSSGSQESDSSQS) show a composition bias toward low complexity. A disordered region spans residues 351 to 371 (SGSLLSSGSQESDSSQSAKKD). A coiled-coil region spans residues 367–401 (SAKKDMLAALKSRQEALEETLRQRLEELKRLCLRE). At serine 515 the chain carries Phosphoserine. Residues 538–665 (DEDSQVTSTI…MPSTPDLRVR (128 aa)) form a disordered region. Residues 542 to 551 (QVTSTISPLQ) show a composition bias toward polar residues. The span at 556-572 (GLPPRPPSSHNRPPPPQ) shows a compositional bias: pro residues. The necessary for tight junction and adherens junction localization; Requires for interaction with PARD3 stretch occupies residues 565–920 (HNRPPPPQSL…QWYQRSTASH (356 aa)). Phosphoserine is present on residues serine 590 and serine 601. Basic residues predominate over residues 609–624 (VKKRSSHGHSSSHKRF). Polar residues predominate over residues 626-658 (STGSCTEAGVSSSLQNSPIRSLPHWNSQSSMPS). Serine 666 and serine 696 each carry phosphoserine. 2 disordered regions span residues 698 to 741 (ESQG…HSSS) and 757 to 810 (AEDS…QSQP). Residues 773-796 (RAAGALGSASSGSMPNLAARSGAA) are compositionally biased toward low complexity. Phosphoserine is present on residues serine 785, serine 854, and serine 882. Disordered regions lie at residues 862–949 (KESW…STFV) and 961–1020 (CKAT…STDE). The segment covering 893–910 (DGAHDKGSGRAAVSDELR) has biased composition (basic and acidic residues). Low complexity predominate over residues 927–947 (SHTSSTSSDSGSQYSTSSQST). Polar residues-rich tracts occupy residues 967 to 981 (ALPQ…SSEI), 994 to 1004 (TWQTGEATENS), and 1011 to 1020 (ESPTHQSTDE).

Interacts (via coiled-coil domain) with CYTH1 (via coiled-coil domain). Interacts with PARD3 (via coiled-coil domain). Found in a complex with PARD3, CYTH1 and FRMD4A. Interacts with CYTH2. Interacts with CYTH3.

The protein resides in the cytoplasm. The protein localises to the cytoskeleton. Its subcellular location is the cell junction. It localises to the adherens junction. It is found in the tight junction. Scaffolding protein that regulates epithelial cell polarity by connecting ARF6 activation with the PAR3 complex. Plays a redundant role with FRMD4B in epithelial polarization. May regulate MAPT secretion by activating ARF6-signaling. This chain is FERM domain-containing protein 4A (Frmd4a), found in Mus musculus (Mouse).